Consider the following 645-residue polypeptide: MNKQQKEFKSFYSIRKSSLGVASVAISTLLLLMSNGEAQAAAEETGGTNTEAQPKTEAVASPTTTSEKAPETKPVANAVSVSNKEVEAPTSETKEAKEVKEVKAPKETKEVKPAAKATNNTYPILNQELREAIKNPAIKDKDHSAPNSRPIDFEMKKKDGTQQFYHYASSVKPARVIFTDSKPEIELGLQSGQFWRKFEVYEGDKKLPIKLVSYDTVKDYAYIRFSVSNGTKAVKIVSSTHFNNKEEKYDYTLMEFAQPIYNSADKFKTEEDYKAEKLLAPYKKAKTLERQVYELNKIQDKLPEKLKAEYKKKLEDTKKALDEQVKSAITEFQKVQPTNEKMTDLQDTKYVVYESVENNESMMDTFVKHPIKTGMLNGKKYMVMETTNDDYWKDFMVEGQRVRTISKDAKNNTRTIIFPYVEGKTLYDAIVKVHVKTIDYDGQYHVRIVDKEAFTKANTDKSNKKEQQDNSAKKEATPATPSKPTPSPVEKESQKQDSQKDDNKQLPSVEKENDASSESGKDKTPATKPTKGEVESSSTTPTKVVSTTQNVAKPTTASSKTTKDVVQTSAGSSEAKDSAPLQKANIKNTNDGHTQSQNNKNTQENKAKSLPQTGEESNKDMTLPLMALLALSSIVAFVLPRKRKN.

An N-terminal signal peptide occupies residues 1-40; sequence MNKQQKEFKSFYSIRKSSLGVASVAISTLLLLMSNGEAQA. The YSIRK-G/S signaling motif signature appears at 12–23; sequence YSIRKSSLGVAS. The segment covering 38–53 has biased composition (low complexity); it reads AQAAAEETGGTNTEAQ. The interval 38–113 is disordered; it reads AQAAAEETGG…APKETKEVKP (76 aa). The span at 84–113 shows a compositional bias: basic and acidic residues; sequence KEVEAPTSETKEAKEVKEVKAPKETKEVKP. NEAT domains lie at 144-269 and 341-458; these read SAPN…KFKT and KMTD…TKAN. Heme contacts are provided by Met362 and Tyr440. Composition is skewed to basic and acidic residues over residues 458 to 476 and 489 to 534; these read NTDKSNKKEQQDNSAKKEA and VEKE…KGEV. Residues 458 to 619 are disordered; sequence NTDKSNKKEQ…LPQTGEESNK (162 aa). A compositionally biased stretch (low complexity) spans 535–560; it reads ESSSTTPTKVVSTTQNVAKPTTASSK. Residues 585-615 are compositionally biased toward polar residues; it reads NIKNTNDGHTQSQNNKNTQENKAKSLPQTGE. An LPXTG sorting signal motif is present at residues 610–614; the sequence is LPQTG. Residue Thr613 is modified to Pentaglycyl murein peptidoglycan amidated threonine. Positions 614 to 645 are cleaved as a propeptide — removed by sortase; the sequence is GEESNKDMTLPLMALLALSSIVAFVLPRKRKN.

It belongs to the IsdB family. As to quaternary structure, interacts with host HBA; this interaction allows heme extraction as iron source. Interacts with IsdA.

It is found in the secreted. The protein resides in the cell wall. Its function is as follows. Cell wall-anchored surface receptor that extracts heme from oxidized metHb to enable growth on hemoglobin as a sole iron source. Rapidly extracts heme from hemoglobin and transfers it to IsdA or IsdC, which then relays it to the membrane transporter/IsdEF for internalization. Also promotes resistance to hydrogen peroxide and killing by neutrophils. In Staphylococcus aureus (strain MSSA476), this protein is Iron-regulated surface determinant protein B (isdB).